A 68-amino-acid chain; its full sequence is Conotoxin TsMMSK-021 (68 aa).

A signal peptide spans 1 to 20 (MMSKLGVLLTICLLLFPLTA). Residues 21–50 (VPLDGDQHADRPADRMQDISSEQHPLFDPV) constitute a propeptide that is removed on maturation. 3 disulfides stabilise this stretch: Cys-53–Cys-66, Cys-54–Cys-62, and Cys-58–Cys-65. 4-hydroxyproline is present on Pro-64.

It belongs to the conotoxin M superfamily. Expressed by the venom duct.

The protein localises to the secreted. This chain is Conotoxin TsMMSK-021, found in Conus tessulatus (Tessellate cone).